The following is a 161-amino-acid chain: Transcriptional repressor NrdR (161 aa).

The span at 1-11 shows a compositional bias: polar residues; sequence MRCPSCSSLDT. The disordered stretch occupies residues 1-20; sequence MRCPSCSSLDTQVKDSRPTE. Residues 3 to 34 fold into a zinc finger; that stretch reads CPSCSSLDTQVKDSRPTEDSAVIRRRRVCMAC. The 91-residue stretch at 49-139 folds into the ATP-cone domain; it reads LTVIKRNGRR…VYRNFREAKD (91 aa).

This sequence belongs to the NrdR family. Zn(2+) is required as a cofactor.

In terms of biological role, negatively regulates transcription of bacterial ribonucleotide reductase nrd genes and operons by binding to NrdR-boxes. In Rhodopseudomonas palustris (strain BisB18), this protein is Transcriptional repressor NrdR.